Here is a 37-residue protein sequence, read N- to C-terminus: Cytochrome b6-f complex subunit 5 (37 aa).

Residues 5–25 traverse the membrane as a helical segment; that stretch reads LLCGIVLGLIPITLMGLFVAA.

The protein belongs to the PetG family. In terms of assembly, the 4 large subunits of the cytochrome b6-f complex are cytochrome b6, subunit IV (17 kDa polypeptide, PetD), cytochrome f and the Rieske protein, while the 4 small subunits are PetG, PetL, PetM and PetN. The complex functions as a dimer.

The protein resides in the cellular thylakoid membrane. Its function is as follows. Component of the cytochrome b6-f complex, which mediates electron transfer between photosystem II (PSII) and photosystem I (PSI), cyclic electron flow around PSI, and state transitions. PetG is required for either the stability or assembly of the cytochrome b6-f complex. This is Cytochrome b6-f complex subunit 5 from Synechococcus sp. (strain CC9311).